Consider the following 296-residue polypeptide: LysM and putative peptidoglycan-binding domain-containing protein 4 (296 aa).

Residues 1 to 217 (MRHEELLTKT…PMDGADCGIQ (217 aa)) are Extracellular-facing. The interval 29 to 67 (KNGSGDSGDSSEEESHRVVLRPRGKERHKSGVHQPPQAG) is disordered. N-linked (GlcNAc...) asparagine glycosylation is present at Asn30. Positions 46-59 (VVLRPRGKERHKSG) are enriched in basic residues. A LysM domain is found at 74–118 (LQRELAQEDSLNKLALQYGCKVADIKKVNNFIREQDLYALKSVKI). Residues 218 to 238 (WWNAVFIMLLIGIVLPVFYLV) form a helical membrane-spanning segment. Residues 239–296 (YFKIQASGETPNSLNTTVIPNGSMAMGTVPGQAPRLAVAVPAVTSADSQFSQTTQAGS) are Cytoplasmic-facing.

It is found in the membrane. In Homo sapiens (Human), this protein is LysM and putative peptidoglycan-binding domain-containing protein 4 (LYSMD4).